Reading from the N-terminus, the 37-residue chain is Potassium channel toxin alpha-KTx 3.13 (37 aa).

Cystine bridges form between Cys7-Cys27, Cys13-Cys32, and Cys17-Cys34. A Lysine amide modification is found at Lys37.

This sequence belongs to the short scorpion toxin superfamily. Potassium channel inhibitor family. Alpha-KTx 03 subfamily. As to expression, expressed by the venom gland.

The protein resides in the secreted. Blocks voltage-gated potassium channels Kv1.1/KCNA1 (IC(50)=203.15 pM), Kv1.2/KCNA2 (IC(50)=8.92 nM) from rat and human Kv1.3 KCNA3/KCNA3 (IC(50)=171 pM) potently. At 2 uM, also blocks Shaker IR and has a moderate effect on rat Kv1.6/KCNA6. This chain is Potassium channel toxin alpha-KTx 3.13, found in Mesobuthus eupeus (Lesser Asian scorpion).